Here is a 216-residue protein sequence, read N- to C-terminus: Probable GTP-binding protein EngB (216 aa).

Positions 27–201 (EGIEVAFAGR…SQKLNTWFNE (175 aa)) constitute an EngB-type G domain. GTP is bound by residues 35 to 42 (GRSNAGKS), 62 to 66 (GRTQL), 80 to 83 (DLPG), 147 to 150 (TKAD), and 180 to 182 (FSS). Mg(2+) is bound by residues Ser-42 and Thr-64.

It belongs to the TRAFAC class TrmE-Era-EngA-EngB-Septin-like GTPase superfamily. EngB GTPase family. Mg(2+) serves as cofactor.

Its function is as follows. Necessary for normal cell division and for the maintenance of normal septation. This is Probable GTP-binding protein EngB from Serratia proteamaculans (strain 568).